The chain runs to 509 residues: NADH-quinone oxidoreductase subunit M (509 aa).

The next 13 helical transmembrane spans lie at 1–21 (MILP…WIAE), 30–50 (WIAL…WATG), 87–107 (LSLL…LCSW), 123–143 (WILG…FFFF), 176–196 (FFIF…GLVF), 223–243 (WLLM…VPVH), 261–281 (LAGI…LPLF), 288–308 (FAPI…LLSF), 316–336 (LVAY…YSGS), 342–362 (GVVV…ILCG), 376–396 (MGGL…FASA), 422–442 (VIIV…LIMI), and 467–487 (VLGL…VLDI).

This sequence belongs to the complex I subunit 4 family. As to quaternary structure, composed of 13 different subunits. Subunits NuoA, H, J, K, L, M, N constitute the membrane sector of the complex.

It is found in the cell inner membrane. It catalyses the reaction a quinone + NADH + 5 H(+)(in) = a quinol + NAD(+) + 4 H(+)(out). Its function is as follows. NDH-1 shuttles electrons from NADH, via FMN and iron-sulfur (Fe-S) centers, to quinones in the respiratory chain. The immediate electron acceptor for the enzyme in this species is believed to be ubiquinone. Couples the redox reaction to proton translocation (for every two electrons transferred, four hydrogen ions are translocated across the cytoplasmic membrane), and thus conserves the redox energy in a proton gradient. The sequence is that of NADH-quinone oxidoreductase subunit M (nuoM) from Pseudomonas aeruginosa (strain ATCC 15692 / DSM 22644 / CIP 104116 / JCM 14847 / LMG 12228 / 1C / PRS 101 / PAO1).